We begin with the raw amino-acid sequence, 565 residues long: Oxygen-dependent choline dehydrogenase (565 aa).

An FAD-binding site is contributed by 7-36 (DYIICGAGSAGNVLATRLTEDPGVTVLLLE). H474 (proton acceptor) is an active-site residue.

The protein belongs to the GMC oxidoreductase family. FAD is required as a cofactor.

It carries out the reaction choline + A = betaine aldehyde + AH2. The enzyme catalyses betaine aldehyde + NAD(+) + H2O = glycine betaine + NADH + 2 H(+). The protein operates within amine and polyamine biosynthesis; betaine biosynthesis via choline pathway; betaine aldehyde from choline (cytochrome c reductase route): step 1/1. Functionally, involved in the biosynthesis of the osmoprotectant glycine betaine. Catalyzes the oxidation of choline to betaine aldehyde and betaine aldehyde to glycine betaine at the same rate. The protein is Oxygen-dependent choline dehydrogenase of Burkholderia pseudomallei (strain 1710b).